Reading from the N-terminus, the 1369-residue chain is MTSSSPKTRKSSTKSKAKRGSKSKKAAEIIAVQRLSKTPPPFRNKVVDKKVLKNLVAWAFKHHGTAATAAMADNLKDLGFRYATQAAVSISVDDLKVPEAKQDLLGQAEELITATEECYRLGEITEVERHTKVIDTWTETNERLVDAVKKNFNQNDPLNSVWMMANSGARGNMSQVRQLVGMRGLMANPQGEIIDLPIRTNFREGLTVTEYVISSYGARKGLVDTALRTADSGYLTRRLVDVAQDVIVREEDCGTTRSILISAEDGKFGNRLVGRLTSEQVVNADEEVLAERDTPIDPQLSKKFEQSNMQGVRVRSPLTCEATRSVCRKCYGWALAHNQLVDLGEAVGIVAAQSIGEPGTQLTMRTFHTGGVSTAETGVVRSTLSGKVEFGSKARVRGYRTPHGVEAQQAEVDFNLSIVPTSGGKPQKIDIPIGSLLFVDNGQNIDIDVTVAQIASGTVQKSVEKATKDVICDLAGQVRYETIIQPREVTDRQGNITLKAQRLGRLWVLAGDVYNLPPNALPVVSGNVSVKEGQVLAEASQASEFGGEVRLRDSIGDSREVQIVTTSMTLDDFKLLEESTHSGEIWHLEAQDNTRYRLNTIPGSKIGNNEVIAELSDDRFKTETGGLIKYAPGLTIKKARSAKNGYEVSKGGTLLWIPQETHEINKDISLLMIKDRQWIEAGTEVVKDIFSQTAGIVTVTQKNDILREIIVRSGTFKLCKESKALDRFEGDGQIVNPGETIAKGIKTDSMVMVQSVETPEGKGLLLRSVEEFNIPDQAQLPELKHVKQPKGPSLGVKASQRLAYKDGELIKSVEGVELLKTQLMLETFDTTPQMTVDVEVIQDLNSKGDRLKLVILESILVRRDTTSDSSHGSTHTELQIENAQVVSAGDVVATTQILCKQEGVVQLPDAVDGDPVRRLIVEREEDTITIDSKGTTLLKVGQRVVDGDFVSKDQSIDACGEIENIDGKKVKLRLGRPYMVSPDSVLHVRDGDLVQRGDGLALLVFERQKTGDIVQGLPRIEELLEARRPRDSAILCKKSGTVDIKKGDDDDSVVVSIIEDNDVISEYPILLGRNVMVRNSQQVIAGEFLTDGPVNPHELLECFFTDLRDKKPLMDAAQEAIAKLQHRMVSEVQNVYKSQGVAIDDKHIEVIVRQMTSKVRIEDAGDTTFLPGELIELRQVEDTNQAISITGGAPSEFTPVLLGITKASLNTDSFISAASFQETTRVLTEAAIEGKSDWLRGLKENVIIGRLIPAGTGFSGFVEELNAEAGPHPDILAEDPAGYRRIQNLRPDYTVDMPSSPVAKNTAVLDDPSEEDLEATRSRHGIDPTTSNFAAFARPVGDDELSAEDQMPDPAALEGLQEEGLLSDE.

The segment at M1–A26 is disordered. The span at K7–K24 shows a compositional bias: basic residues. Positions 253, 320, 327, and 330 each coordinate Zn(2+). The interval T1294 to E1369 is disordered. Over residues D1342–M1351 the composition is skewed to acidic residues. Over residues L1357 to E1369 the composition is skewed to low complexity.

Belongs to the RNA polymerase beta' chain family. RpoC2 subfamily. In cyanobacteria the RNAP catalytic core is composed of 2 alpha, 1 beta, 1 beta', 1 gamma and 1 omega subunit. When a sigma factor is associated with the core the holoenzyme is formed, which can initiate transcription. Zn(2+) is required as a cofactor.

It carries out the reaction RNA(n) + a ribonucleoside 5'-triphosphate = RNA(n+1) + diphosphate. DNA-dependent RNA polymerase catalyzes the transcription of DNA into RNA using the four ribonucleoside triphosphates as substrates. The sequence is that of DNA-directed RNA polymerase subunit beta' from Prochlorococcus marinus (strain NATL2A).